The primary structure comprises 285 residues: Diaminopimelate epimerase (285 aa).

Substrate contacts are provided by Asn-15 and Asn-68. Cys-77 (proton donor) is an active-site residue. Substrate-binding positions include 78–79, Asn-165, Asn-201, and 219–220; these read GN and ER. Cys-228 (proton acceptor) is an active-site residue. Residue 229 to 230 coordinates substrate; sequence GT.

Belongs to the diaminopimelate epimerase family. Homodimer.

The protein resides in the cytoplasm. The catalysed reaction is (2S,6S)-2,6-diaminopimelate = meso-2,6-diaminopimelate. Its pathway is amino-acid biosynthesis; L-lysine biosynthesis via DAP pathway; DL-2,6-diaminopimelate from LL-2,6-diaminopimelate: step 1/1. In terms of biological role, catalyzes the stereoinversion of LL-2,6-diaminopimelate (L,L-DAP) to meso-diaminopimelate (meso-DAP), a precursor of L-lysine and an essential component of the bacterial peptidoglycan. This is Diaminopimelate epimerase from Synechococcus sp. (strain JA-2-3B'a(2-13)) (Cyanobacteria bacterium Yellowstone B-Prime).